Consider the following 349-residue polypeptide: Dihydroorotate dehydrogenase (quinone) (349 aa).

FMN contacts are provided by residues 67–71 (AGLDK) and Thr-91. Position 71 (Lys-71) interacts with substrate. 116-120 (NRLGF) contacts substrate. Residues Asn-147 and Asn-180 each contribute to the FMN site. Position 180 (Asn-180) interacts with substrate. Ser-183 serves as the catalytic Nucleophile. Asn-185 is a binding site for substrate. The FMN site is built by Lys-225 and Thr-253. 254–255 (NT) is a substrate binding site. Residues Gly-276, Gly-305, and 326 to 327 (YT) contribute to the FMN site.

Belongs to the dihydroorotate dehydrogenase family. Type 2 subfamily. As to quaternary structure, monomer. FMN is required as a cofactor.

It localises to the cell membrane. It catalyses the reaction (S)-dihydroorotate + a quinone = orotate + a quinol. It functions in the pathway pyrimidine metabolism; UMP biosynthesis via de novo pathway; orotate from (S)-dihydroorotate (quinone route): step 1/1. Functionally, catalyzes the conversion of dihydroorotate to orotate with quinone as electron acceptor. The polypeptide is Dihydroorotate dehydrogenase (quinone) (Bordetella avium (strain 197N)).